The sequence spans 420 residues: MVSKGLLRLVSSVNRRKMKLLLGIALFAYAASVWGNFVNMRSIQENGELKIESKIEEIIEPLREKIRDLEKSFTQKYPPVKFLSEKDRKRILITGGAGFVGSHLTDKLMMDGHEVTVVDNFFTGRKRNVEHWIGHENFELINHDVVEPLYIEVDQIYHLASPASPPNYMYNPIKTLKTNTIGTLNMLGLAKRVGARLLLASTSEVYGDPEVHPQSEDYWGHVNPIGPRACYDEGKRVAETMCYAYMKQEGVEVRVARIFNTFGPRMHMNDGRVVSNFILQALQGEPLTVYGSGSQTRAFQYVSDLVNGLVALMNSNVSSPVNLGNPEEHTILEFAQLIKNLVGSGSEIQFLSEAQDDPQKRKPDIKKAKLMLGWEPVVPLEEGLNKAIHYFRKELEYQANNQYIPKPKPARVKKGRTRHS.

N-acetylmethionine is present on Met1. The Cytoplasmic portion of the chain corresponds to 1-19 (MVSKGLLRLVSSVNRRKMK). The chain crosses the membrane as a helical; Signal-anchor for type II membrane protein span at residues 20–40 (LLLGIALFAYAASVWGNFVNM). At 41–420 (RSIQENGELK…RVKKGRTRHS (380 aa)) the chain is on the lumenal side. Thr94 carries the phosphothreonine modification. Residues Gly98, Phe99, Val100, Asp119, Asn120, Phe122, Thr123, Gly124, Asp144, and Val145 each contribute to the NAD(+) site. 2 residues coordinate UDP-alpha-D-glucuronate: Leu149 and Tyr150. Positions 159 and 161 each coordinate NAD(+). Position 177 (Lys177) interacts with UDP-alpha-D-glucuronate. Thr178 is an NAD(+) binding site. UDP-alpha-D-glucuronate is bound by residues Asn185, Gly188, Lys191, and Arg192. 3 residues coordinate NAD(+): Ala200, Tyr231, and Lys235. Tyr231 serves as the catalytic Proton acceptor. Positions 245, 248, and 249 each coordinate UDP-alpha-D-glucuronate. NAD(+) is bound by residues Thr261, His267, and Arg272. Residue Asn316 is glycosylated (N-linked (GlcNAc...) asparagine).

It belongs to the NAD(P)-dependent epimerase/dehydratase family. UDP-glucuronic acid decarboxylase subfamily. Homodimer and homotetramer. Interacts with AKT1. It depends on NAD(+) as a cofactor. Ubiquitous. Detected in heart, brain, spleen, lung, testis, liver, skeletal muscle and kidney.

The protein localises to the golgi apparatus. Its subcellular location is the golgi stack membrane. It catalyses the reaction UDP-alpha-D-glucuronate + H(+) = UDP-alpha-D-xylose + CO2. Its pathway is nucleotide-sugar biosynthesis; UDP-alpha-D-xylose biosynthesis; UDP-alpha-D-xylose from UDP-alpha-D-glucuronate: step 1/1. Catalyzes the NAD-dependent decarboxylation of UDP-glucuronic acid to UDP-xylose. Necessary for the biosynthesis of the core tetrasaccharide in glycosaminoglycan biosynthesis. This is UDP-glucuronic acid decarboxylase 1 from Rattus norvegicus (Rat).